The primary structure comprises 158 residues: Transcription elongation factor GreA (158 aa).

Residues 47 to 75 (ENSEYDAAKDEQAFVEQRITQVEKMIRNA) are a coiled coil.

The protein belongs to the GreA/GreB family.

Functionally, necessary for efficient RNA polymerase transcription elongation past template-encoded arresting sites. The arresting sites in DNA have the property of trapping a certain fraction of elongating RNA polymerases that pass through, resulting in locked ternary complexes. Cleavage of the nascent transcript by cleavage factors such as GreA or GreB allows the resumption of elongation from the new 3'terminus. GreA releases sequences of 2 to 3 nucleotides. This is Transcription elongation factor GreA from Oceanobacillus iheyensis (strain DSM 14371 / CIP 107618 / JCM 11309 / KCTC 3954 / HTE831).